Reading from the N-terminus, the 552-residue chain is Chaperonin GroEL (552 aa).

Residues 30 to 33 (TLGP), K51, 87 to 91 (DGTTT), G415, and D499 contribute to the ATP site.

The protein belongs to the chaperonin (HSP60) family. Forms a cylinder of 14 subunits composed of two heptameric rings stacked back-to-back. Interacts with the co-chaperonin GroES.

The protein localises to the cytoplasm. It carries out the reaction ATP + H2O + a folded polypeptide = ADP + phosphate + an unfolded polypeptide.. Functionally, together with its co-chaperonin GroES, plays an essential role in assisting protein folding. The GroEL-GroES system forms a nano-cage that allows encapsulation of the non-native substrate proteins and provides a physical environment optimized to promote and accelerate protein folding. The protein is Chaperonin GroEL of Hamiltonella defensa subsp. Acyrthosiphon pisum (strain 5AT).